The sequence spans 139 residues: D-ribose pyranase (139 aa).

The active-site Proton donor is the His20. Residues Asp28, His106, and 128-130 (YAN) each bind substrate.

It belongs to the RbsD / FucU family. RbsD subfamily. As to quaternary structure, homodecamer.

It is found in the cytoplasm. The enzyme catalyses beta-D-ribopyranose = beta-D-ribofuranose. Its pathway is carbohydrate metabolism; D-ribose degradation; D-ribose 5-phosphate from beta-D-ribopyranose: step 1/2. In terms of biological role, catalyzes the interconversion of beta-pyran and beta-furan forms of D-ribose. The polypeptide is D-ribose pyranase (Aliivibrio salmonicida (strain LFI1238) (Vibrio salmonicida (strain LFI1238))).